The primary structure comprises 78 residues: Large ribosomal subunit protein bL28 (78 aa).

Belongs to the bacterial ribosomal protein bL28 family.

The polypeptide is Large ribosomal subunit protein bL28 (Prochlorococcus marinus (strain AS9601)).